Here is a 472-residue protein sequence, read N- to C-terminus: MLKVDSKLDYKVADISLADWGNKEMQLSEREMPGLMSIREKYGKEKPLKGLKVMGSLHMTIQTAMLIETLHALGADIRWASCNIFSTQDHAAAAIAANGTAKVFAWKGETLEEYWWCTEQALTWPDGSGPDLIVDDGGDATLLIHHGVKAEKDASILDEKTDNKEFQCVLDRLKLSVAETPGKWTAIAEKVRGVSEETTTGVHRLYQMQEAGELLFPAINVNDSVTKSKFDNLYGCRESLADGIKRATDVMIAGKVVVVVGYGDVGKGCAQSMRGFGARVLVTEIDPICALQAAMEGFEVCTMANAVERGDVFVTCTGNYHVITGEHISKMKDEAIICNIGHFDNEIEMGYLENSKTAKKIEIKPQVDKWVMESGKSVIVLAEGRLVNLGCATGHPSFVMSNSFTNQALAQIDLAKNEYEPKVMILSKKLDEEVARLHLERLGVELDVLSKEQADYISVDVEGPYKPDHYRY.

Positions 60, 136, and 197 each coordinate substrate. 198–200 (TTT) provides a ligand contact to NAD(+). Residues K227 and D231 each contribute to the substrate site. Residues N232, 261–266 (GYGDVG), E284, N319, 340–342 (IGH), and N388 contribute to the NAD(+) site.

Belongs to the adenosylhomocysteinase family. NAD(+) is required as a cofactor.

The protein localises to the cytoplasm. The enzyme catalyses S-adenosyl-L-homocysteine + H2O = L-homocysteine + adenosine. The protein operates within amino-acid biosynthesis; L-homocysteine biosynthesis; L-homocysteine from S-adenosyl-L-homocysteine: step 1/1. In terms of biological role, may play a key role in the regulation of the intracellular concentration of adenosylhomocysteine. The polypeptide is Adenosylhomocysteinase (Maridesulfovibrio salexigens (strain ATCC 14822 / DSM 2638 / NCIMB 8403 / VKM B-1763) (Desulfovibrio salexigens)).